The primary structure comprises 215 residues: Uracil phosphoribosyltransferase (215 aa).

5-phospho-alpha-D-ribose 1-diphosphate is bound by residues Arg77, Arg102, and 129–137; that span reads DPMLATGGS. Residues Ile193 and 198-200 each bind uracil; that span reads GDA. A 5-phospho-alpha-D-ribose 1-diphosphate-binding site is contributed by Asp199.

The protein belongs to the UPRTase family. It depends on Mg(2+) as a cofactor.

It carries out the reaction UMP + diphosphate = 5-phospho-alpha-D-ribose 1-diphosphate + uracil. It functions in the pathway pyrimidine metabolism; UMP biosynthesis via salvage pathway; UMP from uracil: step 1/1. With respect to regulation, allosterically activated by GTP. Functionally, catalyzes the conversion of uracil and 5-phospho-alpha-D-ribose 1-diphosphate (PRPP) to UMP and diphosphate. This Corynebacterium urealyticum (strain ATCC 43042 / DSM 7109) protein is Uracil phosphoribosyltransferase.